We begin with the raw amino-acid sequence, 316 residues long: Lipoyl synthase (316 aa).

Residues cysteine 66, cysteine 71, cysteine 77, cysteine 92, cysteine 96, cysteine 99, and serine 306 each contribute to the [4Fe-4S] cluster site. A Radical SAM core domain is found at 78 to 295 (FNRGTATFMI…NLIAFDLGFK (218 aa)).

It belongs to the radical SAM superfamily. Lipoyl synthase family. It depends on [4Fe-4S] cluster as a cofactor.

The protein localises to the cytoplasm. The enzyme catalyses [[Fe-S] cluster scaffold protein carrying a second [4Fe-4S](2+) cluster] + N(6)-octanoyl-L-lysyl-[protein] + 2 oxidized [2Fe-2S]-[ferredoxin] + 2 S-adenosyl-L-methionine + 4 H(+) = [[Fe-S] cluster scaffold protein] + N(6)-[(R)-dihydrolipoyl]-L-lysyl-[protein] + 4 Fe(3+) + 2 hydrogen sulfide + 2 5'-deoxyadenosine + 2 L-methionine + 2 reduced [2Fe-2S]-[ferredoxin]. It participates in protein modification; protein lipoylation via endogenous pathway; protein N(6)-(lipoyl)lysine from octanoyl-[acyl-carrier-protein]: step 2/2. In terms of biological role, catalyzes the radical-mediated insertion of two sulfur atoms into the C-6 and C-8 positions of the octanoyl moiety bound to the lipoyl domains of lipoate-dependent enzymes, thereby converting the octanoylated domains into lipoylated derivatives. The protein is Lipoyl synthase of Wigglesworthia glossinidia brevipalpis.